The primary structure comprises 365 residues: Chorismate synthase (365 aa).

Positions 48 and 54 each coordinate NADP(+). FMN is bound by residues 131 to 133, 243 to 244, Gly-288, 303 to 307, and Arg-329; these read RSS, NA, and KPTSS.

Belongs to the chorismate synthase family. As to quaternary structure, homotetramer. It depends on FMNH2 as a cofactor.

The catalysed reaction is 5-O-(1-carboxyvinyl)-3-phosphoshikimate = chorismate + phosphate. Its pathway is metabolic intermediate biosynthesis; chorismate biosynthesis; chorismate from D-erythrose 4-phosphate and phosphoenolpyruvate: step 7/7. In terms of biological role, catalyzes the anti-1,4-elimination of the C-3 phosphate and the C-6 proR hydrogen from 5-enolpyruvylshikimate-3-phosphate (EPSP) to yield chorismate, which is the branch point compound that serves as the starting substrate for the three terminal pathways of aromatic amino acid biosynthesis. This reaction introduces a second double bond into the aromatic ring system. The sequence is that of Chorismate synthase from Sinorhizobium fredii (strain NBRC 101917 / NGR234).